The sequence spans 650 residues: Chaperone protein HtpG (650 aa).

Residues 1 to 356 (MSTRVETLEF…THDLSLNISR (356 aa)) are a; substrate-binding. The segment at 222-245 (AKDRDSNDDGTAESGAGAENAGDR) is disordered. Residues 357-572 (EILQQDRRIQ…TFDMTPALEK (216 aa)) form a b region. The c stretch occupies residues 573 to 650 (MYRAMGHEMP…LLAERLAEAL (78 aa)).

Belongs to the heat shock protein 90 family. As to quaternary structure, homodimer.

It is found in the cytoplasm. In terms of biological role, molecular chaperone. Has ATPase activity. In Frankia casuarinae (strain DSM 45818 / CECT 9043 / HFP020203 / CcI3), this protein is Chaperone protein HtpG.